The sequence spans 94 residues: Aspartyl/glutamyl-tRNA(Asn/Gln) amidotransferase subunit C (94 aa).

Residues 72–94 (PREKALQGAPEVSEGQFKVPRVV) form a disordered region.

Belongs to the GatC family. In terms of assembly, heterotrimer of A, B and C subunits.

The catalysed reaction is L-glutamyl-tRNA(Gln) + L-glutamine + ATP + H2O = L-glutaminyl-tRNA(Gln) + L-glutamate + ADP + phosphate + H(+). It carries out the reaction L-aspartyl-tRNA(Asn) + L-glutamine + ATP + H2O = L-asparaginyl-tRNA(Asn) + L-glutamate + ADP + phosphate + 2 H(+). Functionally, allows the formation of correctly charged Asn-tRNA(Asn) or Gln-tRNA(Gln) through the transamidation of misacylated Asp-tRNA(Asn) or Glu-tRNA(Gln) in organisms which lack either or both of asparaginyl-tRNA or glutaminyl-tRNA synthetases. The reaction takes place in the presence of glutamine and ATP through an activated phospho-Asp-tRNA(Asn) or phospho-Glu-tRNA(Gln). This chain is Aspartyl/glutamyl-tRNA(Asn/Gln) amidotransferase subunit C, found in Moorella thermoacetica (strain ATCC 39073 / JCM 9320).